Consider the following 236-residue polypeptide: Putative protein ZBED10P (236 aa).

This is Putative protein ZBED10P from Homo sapiens (Human).